The chain runs to 544 residues: CRISPR-associated endodeoxyribonuclease Cas12f2 (544 aa).

The segment at 1–195 is recognition domain (REC); the sequence is MNMSKTTISV…KPNERETRYV (195 aa). The interval 196–326 is wedge domain (WED); the sequence is HISKLESPSK…YLQYTYEAEV (131 aa). The tract at residues 327-334 is linker; the sequence is EANKEYAG. A ruvC-I region spans residues 335-485; the sequence is CLGVDIGCSK…VYVKPDYTSQ (151 aa). Residues Asp-339 and Glu-430 contribute to the active site. The tract at residues 486-520 is target nucleic acid-binding (TNB); that stretch reads TCSSCGADKEKTERPSQAIFRCLNPTCRYYQRDIN. Zn(2+)-binding residues include Cys-487, Cys-490, Cys-507, and Cys-512. Residues 521–541 are ruvC-II; that stretch reads ADFNAAVNIAKKALNNTEVVT. Asp-522 is an active-site residue.

It belongs to the CRISPR-associated endonuclease Cas12f family. In terms of assembly, an asymmetric homodimer. Guide RNA is probably required for dimerization. Mg(2+) serves as cofactor. It depends on Zn(2+) as a cofactor.

Its function is as follows. CRISPR (clustered regularly interspaced short palindromic repeat), is an adaptive immune system that provides protection against mobile genetic elements (viruses, transposable elements and conjugative plasmids). CRISPR clusters contain sequences complementary to antecedent mobile elements and target invading nucleic acids. CRISPR clusters are transcribed and processed into CRISPR RNA (crRNA), which requires a trans-encoded small RNA (tracrRNA), but not this protein (in vitro). Recognizes a short motif in the CRISPR repeat sequences (the 5' PAM or protospacer adjacent motif, TTAT in this organism) to help distinguish self versus nonself, as targets within the CRISPR locus do not have PAMs. Upon expression in E.coli of this protein, a mini CRISPR array and the probable tracrRNA, has dsDNA endonuclease activity. DNA cleavage is centered around positions 21 base pairs 3' of PAM. The mini system does not protect E.coli against transformation by foreign plasmids. This chain is CRISPR-associated endodeoxyribonuclease Cas12f2, found in Micrarchaeota archaeon (strain CG1_02_47_40).